We begin with the raw amino-acid sequence, 107 residues long: Somatoliberin (107 aa).

The first 19 residues, 1–19 (MPLWVFFVILTLTNGSHCS), serve as a signal peptide directing secretion. Positions 20 to 30 (PSPSLPFRIRR) are excised as a propeptide. At Leu-74 the chain carries Leucine amide. Positions 77–107 (QVDSMWADHRQMSLESLLAALLQKHSRDSQG) are excised as a propeptide.

It belongs to the glucagon family.

Its subcellular location is the secreted. Its function is as follows. GRF is released by the hypothalamus and acts on the adenohypophyse to stimulate the secretion of growth hormone. In Mesocricetus auratus (Golden hamster), this protein is Somatoliberin (GHRH).